Consider the following 326-residue polypeptide: L-lactate dehydrogenase (326 aa).

39-60 (DVVTGMPEGKALDDSQATSIAD) is a binding site for NAD(+). The substrate site is built by Arg-99, Asn-131, and Arg-162. Residue Asn-131 participates in NAD(+) binding. His-186 acts as the Proton acceptor in catalysis.

It belongs to the LDH/MDH superfamily. LDH family. In terms of assembly, homotetramer.

The enzyme catalyses (S)-lactate + NAD(+) = pyruvate + NADH + H(+). Its pathway is fermentation; pyruvate fermentation to lactate; (S)-lactate from pyruvate: step 1/1. The protein is L-lactate dehydrogenase of Toxoplasma gondii.